We begin with the raw amino-acid sequence, 575 residues long: DNA-directed RNA polymerase subunit beta' (575 aa).

Positions 64, 66, 85, and 88 each coordinate Zn(2+). Asp440, Asp442, and Asp444 together coordinate Mg(2+).

It belongs to the RNA polymerase beta' chain family. RpoC1 subfamily. In terms of assembly, in plastids the minimal PEP RNA polymerase catalytic core is composed of four subunits: alpha, beta, beta', and beta''. When a (nuclear-encoded) sigma factor is associated with the core the holoenzyme is formed, which can initiate transcription. Mg(2+) is required as a cofactor. Requires Zn(2+) as cofactor.

The protein resides in the plastid. It catalyses the reaction RNA(n) + a ribonucleoside 5'-triphosphate = RNA(n+1) + diphosphate. DNA-dependent RNA polymerase catalyzes the transcription of DNA into RNA using the four ribonucleoside triphosphates as substrates. This is DNA-directed RNA polymerase subunit beta' from Euglena longa (Euglenophycean alga).